Reading from the N-terminus, the 506-residue chain is 2,3-bisphosphoglycerate-independent phosphoglycerate mutase (506 aa).

Mn(2+)-binding residues include Asp13 and Ser63. The Phosphoserine intermediate role is filled by Ser63. Substrate-binding positions include His124, 153–154, Arg183, Arg189, 254–257, and Lys330; these read RD and RADR. Mn(2+) contacts are provided by Asp396, His400, Asp437, His438, and His456.

The protein belongs to the BPG-independent phosphoglycerate mutase family. Monomer. Mn(2+) is required as a cofactor.

It carries out the reaction (2R)-2-phosphoglycerate = (2R)-3-phosphoglycerate. It functions in the pathway carbohydrate degradation; glycolysis; pyruvate from D-glyceraldehyde 3-phosphate: step 3/5. In terms of biological role, catalyzes the interconversion of 2-phosphoglycerate and 3-phosphoglycerate. This Cereibacter sphaeroides (strain ATCC 17025 / ATH 2.4.3) (Rhodobacter sphaeroides) protein is 2,3-bisphosphoglycerate-independent phosphoglycerate mutase.